We begin with the raw amino-acid sequence, 319 residues long: Coproporphyrin III ferrochelatase 2 (319 aa).

Fe-coproporphyrin III is bound by residues Tyr13, Arg30, 46 to 47 (RY), Ser54, and Tyr125. 2 residues coordinate Fe(2+): His181 and Glu262.

This sequence belongs to the ferrochelatase family.

The protein localises to the cytoplasm. It catalyses the reaction Fe-coproporphyrin III + 2 H(+) = coproporphyrin III + Fe(2+). Its pathway is porphyrin-containing compound metabolism; protoheme biosynthesis. Involved in coproporphyrin-dependent heme b biosynthesis. Catalyzes the insertion of ferrous iron into coproporphyrin III to form Fe-coproporphyrin III. This is Coproporphyrin III ferrochelatase 2 from Bacillus cereus (strain ATCC 14579 / DSM 31 / CCUG 7414 / JCM 2152 / NBRC 15305 / NCIMB 9373 / NCTC 2599 / NRRL B-3711).